The chain runs to 723 residues: Aminodeoxychorismate synthase (723 aa).

Residues 2 to 195 enclose the Glutamine amidotransferase type-1 domain; that stretch reads RTLLVDNYDS…RDLTERHGRT (194 aa). Cys-82 acts as the Nucleophile in catalysis. Residues 96–117 are disordered; sequence VGRAPEPRHGRTSAVRHDGTGL. A compositionally biased stretch (basic and acidic residues) spans 98–114; sequence RAPEPRHGRTSAVRHDG. Residues His-169 and Glu-171 contribute to the active site. 2 disordered regions span residues 192–219 and 693–723; these read HGRTRHGGRAGHGTLPPPAPARETKATT and FPGRERPGKDLDGEPDDGTDAGAPKDLVLPG. The PABB component stretch occupies residues 255-723; that stretch reads LDSSRPGGEL…GAPKDLVLPG (469 aa). Basic and acidic residues predominate over residues 695–704; the sequence is GRERPGKDLD.

In the C-terminal section; belongs to the anthranilate synthase component I family.

The catalysed reaction is chorismate + L-glutamine = 4-amino-4-deoxychorismate + L-glutamate. The protein operates within antibiotic biosynthesis; candicidin biosynthesis. Involved in candicidin biosynthesis. Catalyzes the biosynthesis of 4-amino-4-deoxychorismate (ADC) from chorismate and glutamine. This Streptomyces griseus protein is Aminodeoxychorismate synthase.